The chain runs to 345 residues: S-adenosylmethionine:tRNA ribosyltransferase-isomerase (345 aa).

This sequence belongs to the QueA family. Monomer.

Its subcellular location is the cytoplasm. It carries out the reaction 7-aminomethyl-7-carbaguanosine(34) in tRNA + S-adenosyl-L-methionine = epoxyqueuosine(34) in tRNA + adenine + L-methionine + 2 H(+). It functions in the pathway tRNA modification; tRNA-queuosine biosynthesis. In terms of biological role, transfers and isomerizes the ribose moiety from AdoMet to the 7-aminomethyl group of 7-deazaguanine (preQ1-tRNA) to give epoxyqueuosine (oQ-tRNA). The chain is S-adenosylmethionine:tRNA ribosyltransferase-isomerase from Shewanella loihica (strain ATCC BAA-1088 / PV-4).